We begin with the raw amino-acid sequence, 104 residues long: L-rhamnose mutarotase (104 aa).

A substrate-binding site is contributed by Y18. H22 acts as the Proton donor in catalysis. Substrate-binding positions include Y41 and 76 to 77 (WW).

It belongs to the rhamnose mutarotase family. In terms of assembly, homodimer.

Its subcellular location is the cytoplasm. It catalyses the reaction alpha-L-rhamnose = beta-L-rhamnose. Its pathway is carbohydrate metabolism; L-rhamnose metabolism. Its function is as follows. Involved in the anomeric conversion of L-rhamnose. This is L-rhamnose mutarotase from Salmonella arizonae (strain ATCC BAA-731 / CDC346-86 / RSK2980).